The following is a 319-amino-acid chain: 4-diphosphocytidyl-2-C-methyl-D-erythritol kinase (319 aa).

K18 is an active-site residue. 103-113 contributes to the ATP binding site; the sequence is PIGAGLAGGST. D145 is a catalytic residue.

The protein belongs to the GHMP kinase family. IspE subfamily.

It carries out the reaction 4-CDP-2-C-methyl-D-erythritol + ATP = 4-CDP-2-C-methyl-D-erythritol 2-phosphate + ADP + H(+). Its pathway is isoprenoid biosynthesis; isopentenyl diphosphate biosynthesis via DXP pathway; isopentenyl diphosphate from 1-deoxy-D-xylulose 5-phosphate: step 3/6. Functionally, catalyzes the phosphorylation of the position 2 hydroxy group of 4-diphosphocytidyl-2C-methyl-D-erythritol. The polypeptide is 4-diphosphocytidyl-2-C-methyl-D-erythritol kinase (Prochlorococcus marinus (strain NATL2A)).